Consider the following 159-residue polypeptide: Putative RING-H2 finger protein ATL69 (159 aa).

Residues Leu-13–Ala-33 traverse the membrane as a helical segment. The RING-type; atypical zinc finger occupies Cys-94–Arg-136.

This sequence belongs to the RING-type zinc finger family. ATL subfamily.

It localises to the membrane. The enzyme catalyses S-ubiquitinyl-[E2 ubiquitin-conjugating enzyme]-L-cysteine + [acceptor protein]-L-lysine = [E2 ubiquitin-conjugating enzyme]-L-cysteine + N(6)-ubiquitinyl-[acceptor protein]-L-lysine.. Its pathway is protein modification; protein ubiquitination. This Arabidopsis thaliana (Mouse-ear cress) protein is Putative RING-H2 finger protein ATL69 (ATL69).